The chain runs to 278 residues: HTH-type transcriptional regulator ExsA (278 aa).

An HTH araC/xylS-type domain is found at 171–269 (ERLQLFMEKH…GCTPSRSRQG (99 aa)). DNA-binding regions (H-T-H motif) lie at residues 188-209 (SDFS…GSVY) and 236-259 (IVDI…RRRF).

As to quaternary structure, homodimer. Interacts with ExsD; this interaction inhibits ExsA activity.

With respect to regulation, in the absence of inducing signals such as low Ca(2+) or host cell contact, the T3SS/injectisome is expressed at a low basal level and exists in a quiescent state due to ExsA sequestration by ExsD in a 1:1 complex. Upon host cell contact, this interaction is disrupted by the anti-antiactivator protein ExsC leading to ExsA activation. Transcriptional regulator that plays an essential role in the activation the type III secretion system (T3SS) operons. In addition, ExsA directly regulates the transcription of ImpA virulence factor that cooperatively inhibits the functions of host macrophages together with the T3SS. The sequence is that of HTH-type transcriptional regulator ExsA (exsA) from Pseudomonas aeruginosa (strain ATCC 15692 / DSM 22644 / CIP 104116 / JCM 14847 / LMG 12228 / 1C / PRS 101 / PAO1).